A 220-amino-acid polypeptide reads, in one-letter code: Uracil-DNA glycosylase (220 aa).

The Proton acceptor role is filled by Asp65.

It belongs to the uracil-DNA glycosylase (UDG) superfamily. UNG family.

It localises to the cytoplasm. The enzyme catalyses Hydrolyzes single-stranded DNA or mismatched double-stranded DNA and polynucleotides, releasing free uracil.. Its function is as follows. Excises uracil residues from the DNA which can arise as a result of misincorporation of dUMP residues by DNA polymerase or due to deamination of cytosine. This Leuconostoc mesenteroides subsp. mesenteroides (strain ATCC 8293 / DSM 20343 / BCRC 11652 / CCM 1803 / JCM 6124 / NCDO 523 / NBRC 100496 / NCIMB 8023 / NCTC 12954 / NRRL B-1118 / 37Y) protein is Uracil-DNA glycosylase.